We begin with the raw amino-acid sequence, 570 residues long: Pre-mRNA 3'-end-processing factor FIP1 (570 aa).

Basic and acidic residues predominate over residues 1-10; sequence MSAEEADKTT. The segment at 1–107 is disordered; it reads MSAEEADKTT…SDDDDDDVRV (107 aa). The span at 16 to 38 shows a compositional bias: acidic residues; that stretch reads AGDEEEEWLYGDEGESKETEEEE. Low complexity predominate over residues 56–77; it reads DAPTTTNNSSDSATPPTTTTTT. Positions 87–104 are enriched in acidic residues; it reads APGEDEDSESDSDDDDDD. Thr-125 is modified (phosphothreonine). At Ser-247 the chain carries Phosphoserine. Disordered regions lie at residues 300–328, 371–400, and 418–570; these read RRRH…VQKM, PNFP…YDGR, and GAVN…EAME. A compositionally biased stretch (pro residues) spans 371-384; it reads PNFPPPTGGPPPSL. Basic and acidic residues-rich tracts occupy residues 436-462 and 476-506; these read YPRR…RDHS and DEER…EERH. 2 stretches are compositionally biased toward basic residues: residues 520-529 and 538-548; these read KSSRSSSRRR and HRRHKHKKSKR. Residues 549–562 show a composition bias toward basic and acidic residues; sequence SKEGKEPSEERSAD.

This sequence belongs to the FIP1 family.

The protein resides in the nucleus. Its function is as follows. Involved in mRNA processing. The sequence is that of Pre-mRNA 3'-end-processing factor FIP1 (fip1l1) from Danio rerio (Zebrafish).